We begin with the raw amino-acid sequence, 119 residues long: uncharacterized protein (119 aa).

Transmembrane regions (helical) follow at residues 57 to 77 and 80 to 100; these read FSHH…SILF and YIFV…FILH.

It localises to the membrane. This is an uncharacterized protein from Saccharomyces cerevisiae (strain ATCC 204508 / S288c) (Baker's yeast).